Here is a 135-residue protein sequence, read N- to C-terminus: Insoluble matrix shell protein 5 (135 aa).

An N-terminal signal peptide occupies residues 1-16; that stretch reads MILVVTLACLIAVVCC. EF-hand domains are found at residues 21 to 56 and 93 to 128; these read TDQGQISKVFKAYDIDGNNKISRVEGTMVFRDADLN and IEFVEGNQGFDHFDKNRDNEISSWEFTQTWMETVRP. Residues D34, D36, N38, K40, E45, D106, N108, D110, E112, and E117 each coordinate Ca(2+).

Component of the acid-insoluble organic matrix of the calcified shell.

The protein localises to the secreted. The sequence is that of Insoluble matrix shell protein 5 from Ruditapes philippinarum (Japanese carpet shell).